Consider the following 119-residue polypeptide: Large ribosomal subunit protein bL20 (119 aa).

It belongs to the bacterial ribosomal protein bL20 family.

In terms of biological role, binds directly to 23S ribosomal RNA and is necessary for the in vitro assembly process of the 50S ribosomal subunit. It is not involved in the protein synthesizing functions of that subunit. The sequence is that of Large ribosomal subunit protein bL20 from Nitrosomonas europaea (strain ATCC 19718 / CIP 103999 / KCTC 2705 / NBRC 14298).